The following is a 126-amino-acid chain: Probable DNA-directed RNA polymerase II subunit RPB11 (126 aa).

It belongs to the archaeal Rpo11/eukaryotic RPB11/RPC19 RNA polymerase subunit family. In terms of assembly, component of the RNA polymerase II (Pol II) complex consisting of 12 subunits.

Its subcellular location is the nucleus. Its function is as follows. DNA-dependent RNA polymerase catalyzes the transcription of DNA into RNA using the four ribonucleoside triphosphates as substrates. Component of RNA polymerase II which synthesizes mRNA precursors and many functional non-coding RNAs. Pol II is the central component of the basal RNA polymerase II transcription machinery. It is composed of mobile elements that move relative to each other. RPB11 is part of the core element with the central large cleft. The protein is Probable DNA-directed RNA polymerase II subunit RPB11 of Plasmodium chabaudi chabaudi.